The chain runs to 275 residues: NH(3)-dependent NAD(+) synthetase (275 aa).

47-54 (GISGGQDS) contacts ATP. A Mg(2+)-binding site is contributed by Asp-53. Arg-139 serves as a coordination point for deamido-NAD(+). Position 159 (Thr-159) interacts with ATP. Residue Glu-164 participates in Mg(2+) binding. 2 residues coordinate deamido-NAD(+): Lys-172 and Asp-179. The ATP site is built by Lys-188 and Thr-210. 259–260 (HK) is a deamido-NAD(+) binding site.

The protein belongs to the NAD synthetase family. Homodimer.

It catalyses the reaction deamido-NAD(+) + NH4(+) + ATP = AMP + diphosphate + NAD(+) + H(+). It functions in the pathway cofactor biosynthesis; NAD(+) biosynthesis; NAD(+) from deamido-NAD(+) (ammonia route): step 1/1. Functionally, catalyzes the ATP-dependent amidation of deamido-NAD to form NAD. Uses ammonia as a nitrogen source. The sequence is that of NH(3)-dependent NAD(+) synthetase from Staphylococcus epidermidis (strain ATCC 35984 / DSM 28319 / BCRC 17069 / CCUG 31568 / BM 3577 / RP62A).